The sequence spans 394 residues: Actin-related protein 2 (394 aa).

At methionine 1 the chain carries N-acetylmethionine. Residues 160-162 and 214-218 contribute to the ATP site; these read GDG and RMIKE. At lysine 299 the chain carries N6-acetyllysine. 305 to 310 is an ATP binding site; the sequence is GGSTMY. Lysine 322 is subject to N6-acetyllysine.

This sequence belongs to the actin family. ARP2 subfamily. Component of the Arp2/3 complex composed of ACTR2/ARP2, ACTR3/ARP3, ARPC1B/p41-ARC, ARPC2/p34-ARC, ARPC3/p21-ARC, ARPC4/p20-ARC and ARPC5/p16-ARC.

It localises to the cytoplasm. The protein localises to the cytoskeleton. The protein resides in the cell projection. It is found in the nucleus. ATP-binding component of the Arp2/3 complex, a multiprotein complex that mediates actin polymerization upon stimulation by nucleation-promoting factor (NPF). The Arp2/3 complex mediates the formation of branched actin networks in the cytoplasm, providing the force for cell motility. Seems to contact the pointed end of the daughter actin filament. In addition to its role in the cytoplasmic cytoskeleton, the Arp2/3 complex also promotes actin polymerization in the nucleus, thereby regulating gene transcription and repair of damaged DNA. The Arp2/3 complex promotes homologous recombination (HR) repair in response to DNA damage by promoting nuclear actin polymerization, leading to drive motility of double-strand breaks (DSBs). The chain is Actin-related protein 2 (Actr2) from Rattus norvegicus (Rat).